The following is a 30-amino-acid chain: Urease subunit alpha (30 aa).

The protein belongs to the metallo-dependent hydrolases superfamily. Urease alpha subunit family. In terms of assembly, heterotrimer of UreA (gamma), UreB (beta) and UreC (alpha) subunits. Three heterotrimers associate to form the active enzyme. The cofactor is Ni cation.

The protein resides in the cytoplasm. It carries out the reaction urea + 2 H2O + H(+) = hydrogencarbonate + 2 NH4(+). The protein operates within nitrogen metabolism; urea degradation; CO(2) and NH(3) from urea (urease route): step 1/1. This Escherichia coli protein is Urease subunit alpha (ureC).